The chain runs to 351 residues: Peptide chain release factor 1 (351 aa).

Residue Gln233 is modified to N5-methylglutamine.

It belongs to the prokaryotic/mitochondrial release factor family. Post-translationally, methylated by PrmC. Methylation increases the termination efficiency of RF1.

The protein localises to the cytoplasm. In terms of biological role, peptide chain release factor 1 directs the termination of translation in response to the peptide chain termination codons UAG and UAA. The chain is Peptide chain release factor 1 (prfA) from Treponema pallidum (strain Nichols).